Consider the following 330-residue polypeptide: DNA-directed RNA polymerase subunit alpha (330 aa).

The segment at 1–236 is alpha N-terminal domain (alpha-NTD); it reads MQGSVTEFLK…EQLDAFVDLR (236 aa). The interval 250 to 330 is alpha C-terminal domain (alpha-CTD); sequence FDPILLRPVD…NWPPASIAED (81 aa).

Belongs to the RNA polymerase alpha chain family. Homodimer. The RNAP catalytic core consists of 2 alpha, 1 beta, 1 beta' and 1 omega subunit. When a sigma factor is associated with the core the holoenzyme is formed, which can initiate transcription.

The catalysed reaction is RNA(n) + a ribonucleoside 5'-triphosphate = RNA(n+1) + diphosphate. In terms of biological role, DNA-dependent RNA polymerase catalyzes the transcription of DNA into RNA using the four ribonucleoside triphosphates as substrates. In Vibrio atlanticus (strain LGP32) (Vibrio splendidus (strain Mel32)), this protein is DNA-directed RNA polymerase subunit alpha.